We begin with the raw amino-acid sequence, 180 residues long: UPF0227 protein YcfP (180 aa).

The protein belongs to the UPF0227 family.

In Salmonella arizonae (strain ATCC BAA-731 / CDC346-86 / RSK2980), this protein is UPF0227 protein YcfP.